Here is a 209-residue protein sequence, read N- to C-terminus: Probable GTP-binding protein EngB (209 aa).

One can recognise an EngB-type G domain in the interval 22–198 (TPLEIAFVGR…NRTVGSWFDA (177 aa)). The Mg(2+) site is built by Ser37 and Thr59.

It belongs to the TRAFAC class TrmE-Era-EngA-EngB-Septin-like GTPase superfamily. EngB GTPase family. Mg(2+) is required as a cofactor.

Its function is as follows. Necessary for normal cell division and for the maintenance of normal septation. The chain is Probable GTP-binding protein EngB from Neisseria meningitidis serogroup C (strain 053442).